A 79-amino-acid polypeptide reads, in one-letter code: Acyl carrier protein (79 aa).

Residues 1-76 (MEVFEEVRDV…DVVTYIENLN (76 aa)) enclose the Carrier domain. At Ser36 the chain carries O-(pantetheine 4'-phosphoryl)serine.

Belongs to the acyl carrier protein (ACP) family. In terms of processing, 4'-phosphopantetheine is transferred from CoA to a specific serine of apo-ACP by AcpS. This modification is essential for activity because fatty acids are bound in thioester linkage to the sulfhydryl of the prosthetic group.

Its subcellular location is the cytoplasm. The protein operates within lipid metabolism; fatty acid biosynthesis. Functionally, carrier of the growing fatty acid chain in fatty acid biosynthesis. This Campylobacter hominis (strain ATCC BAA-381 / DSM 21671 / CCUG 45161 / LMG 19568 / NCTC 13146 / CH001A) protein is Acyl carrier protein.